Consider the following 198-residue polypeptide: Recombination protein RecR (198 aa).

The C4-type zinc finger occupies 56–71 (CKVCGNFSEEDECVIC). The region spanning 79-174 (GVICVVEEPK…RVSKLASGLP (96 aa)) is the Toprim domain.

Belongs to the RecR family.

May play a role in DNA repair. It seems to be involved in an RecBC-independent recombinational process of DNA repair. It may act with RecF and RecO. This Tropheryma whipplei (strain TW08/27) (Whipple's bacillus) protein is Recombination protein RecR.